Consider the following 104-residue polypeptide: L-rhamnose mutarotase (104 aa).

Substrate is bound at residue Y18. The active-site Proton donor is the H22. Substrate-binding positions include Y41 and 76-77 (WW).

This sequence belongs to the rhamnose mutarotase family. In terms of assembly, homodimer.

The protein localises to the cytoplasm. It carries out the reaction alpha-L-rhamnose = beta-L-rhamnose. The protein operates within carbohydrate metabolism; L-rhamnose metabolism. Its function is as follows. Involved in the anomeric conversion of L-rhamnose. This is L-rhamnose mutarotase from Escherichia coli O127:H6 (strain E2348/69 / EPEC).